We begin with the raw amino-acid sequence, 301 residues long: NADH-cytochrome b5 reductase 3 (301 aa).

Gly-2 carries the N-myristoyl glycine lipid modification. Positions 40 to 152 constitute an FAD-binding FR-type domain; sequence DIKYSLRLID…RGPNGLLVYQ (113 aa). Position 42 is an N6-acetyllysine (Lys-42). Residue Tyr-43 is modified to Phosphotyrosine. FAD contacts are provided by Arg-92, Pro-93, Tyr-94, Val-109, Lys-111, and Phe-114. Position 120 is an N6-acetyllysine (Lys-120). FAD-binding residues include Lys-126, Met-127, Ser-128, and Thr-185.

The protein belongs to the flavoprotein pyridine nucleotide cytochrome reductase family. In terms of assembly, component of a complex composed of cytochrome b5, NADH-cytochrome b5 reductase (CYB5R3) and MTARC2. Interacts with MTLN; the interaction is required to maintain cellular lipid composition and leads to stimulation of mitochondrial respiratory complex I activity. The cofactor is FAD.

It localises to the endoplasmic reticulum membrane. The protein resides in the mitochondrion outer membrane. It catalyses the reaction 2 Fe(III)-[cytochrome b5] + NADH = 2 Fe(II)-[cytochrome b5] + NAD(+) + H(+). Functionally, catalyzes the reduction of two molecules of cytochrome b5 using NADH as the electron donor. This is NADH-cytochrome b5 reductase 3 (CYB5R3) from Macaca fascicularis (Crab-eating macaque).